The primary structure comprises 478 residues: Protein WVD2-like 7 (478 aa).

2 disordered regions span residues 201–326 (DSAL…TGST) and 385–420 (PMPS…SASI). Positions 208-217 (AGSKLDEHAS) are enriched in basic and acidic residues. Polar residues-rich tracts occupy residues 219-232 (KPSN…SSVN) and 264-277 (GSSL…NVDA). Residues 278–289 (KSQKELRPKKTI) are compositionally biased toward basic and acidic residues. 2 stretches are compositionally biased toward polar residues: residues 309–326 (RCKT…TGST) and 407–420 (VAQS…SASI).

It belongs to the TPX2 family. In terms of tissue distribution, expressed in seedlings.

The protein resides in the cytoplasm. The protein localises to the cytoskeleton. In terms of biological role, microtubule-associated protein (MAP) that regulates the orientation of interphase cortical microtubules. The polypeptide is Protein WVD2-like 7 (Arabidopsis thaliana (Mouse-ear cress)).